The primary structure comprises 394 residues: Elongation factor Tu (394 aa).

The region spanning 10–204 is the tr-type G domain; it reads KEHANIGTIG…AVDTYIPTPE (195 aa). A G1 region spans residues 19 to 26; it reads GHVDHGKT. Residue 19 to 26 coordinates GTP; it reads GHVDHGKT. Thr-26 contributes to the Mg(2+) binding site. Residues 60 to 64 are G2; that stretch reads GITIN. The G3 stretch occupies residues 81–84; that stretch reads DCPG. GTP is bound by residues 81 to 85 and 136 to 139; these read DCPGH and NKVD. The interval 136–139 is G4; sequence NKVD. The tract at residues 174–176 is G5; the sequence is SAL.

This sequence belongs to the TRAFAC class translation factor GTPase superfamily. Classic translation factor GTPase family. EF-Tu/EF-1A subfamily. As to quaternary structure, monomer.

It localises to the cytoplasm. The enzyme catalyses GTP + H2O = GDP + phosphate + H(+). Functionally, GTP hydrolase that promotes the GTP-dependent binding of aminoacyl-tRNA to the A-site of ribosomes during protein biosynthesis. This chain is Elongation factor Tu, found in Staphylococcus aureus (strain COL).